Here is a 128-residue protein sequence, read N- to C-terminus: Large ribosomal subunit protein bL12c (128 aa).

The segment at 103–128 is disordered; it reads QEGLGKDAAEDAKKQIEDAGGKVSLT. Residues 106–122 are compositionally biased toward basic and acidic residues; that stretch reads LGKDAAEDAKKQIEDAG.

The protein belongs to the bacterial ribosomal protein bL12 family. Homodimer. Part of the ribosomal stalk of the 50S ribosomal subunit. Forms a multimeric L10(L12)X complex, where L10 forms an elongated spine to which 2 to 4 L12 dimers bind in a sequential fashion. Binds GTP-bound translation factors.

It localises to the plastid. The protein localises to the chloroplast. Functionally, forms part of the ribosomal stalk which helps the ribosome interact with GTP-bound translation factors. Is thus essential for accurate translation. The protein is Large ribosomal subunit protein bL12c of Thalassiosira pseudonana (Marine diatom).